We begin with the raw amino-acid sequence, 279 residues long: 4-diphosphocytidyl-2-C-methyl-D-erythritol kinase (279 aa).

The active site involves Lys9. Pro92 to Ser102 is an ATP binding site. Asp134 is a catalytic residue.

The protein belongs to the GHMP kinase family. IspE subfamily.

The catalysed reaction is 4-CDP-2-C-methyl-D-erythritol + ATP = 4-CDP-2-C-methyl-D-erythritol 2-phosphate + ADP + H(+). Its pathway is isoprenoid biosynthesis; isopentenyl diphosphate biosynthesis via DXP pathway; isopentenyl diphosphate from 1-deoxy-D-xylulose 5-phosphate: step 3/6. Functionally, catalyzes the phosphorylation of the position 2 hydroxy group of 4-diphosphocytidyl-2C-methyl-D-erythritol. This chain is 4-diphosphocytidyl-2-C-methyl-D-erythritol kinase, found in Syntrophus aciditrophicus (strain SB).